The sequence spans 235 residues: FsC-acetyl coenzyme A-N(2)-transacetylase (235 aa).

The 177-residue stretch at 14–190 (LELVPLGHEH…RYSITREEWL (177 aa)) folds into the N-acetyltransferase domain. Residues 106–108 (FRV), glycine 114, asparagine 146, and 151–153 (AVM) each bind CoA.

It participates in siderophore biosynthesis. In terms of biological role, fsC-acetyl coenzyme A-N(2)-transacetylase; part of the siderophore biosynthetic pathway. Aspergillus fumigatus produces 4 types of siderophores, low-molecular-mass iron chelators, including excreted fusarinine C (FsC) and triacetylfusarinine C (TAFC) for iron uptake and intacellular ferricrocin (FC) for hyphal and hydroxyferricrocin (HFC) for conidial iron distribution and storage. TAFC consists of 3 N(2)-acetyl-N(5)-anhydromevalonyl-N(5)-hydroxyornithine residues cyclically linked by ester bonds; FC is a cyclic hexapeptide with the structure Gly-Ser-Gly-(N(5)-acetyl-N(5)-hydroxyornithine)x3. The biosynthesis of all four siderophores depends on the hydroxylation of ornithine, catalyzed by the monooxygenase sidA. Subsequently, the pathways for biosynthesis of extra- and intracellular siderophores split. For biosynthesis of extracellular siderophores, the transacylase sidF transfers anhydromevalonyl to N(5)-hydroxyornithine. The required anhydromevalonyl-CoA moiety is derived from mevalonate by CoA ligation and dehydration catalyzed by sidI and sidH respectively. The acetylation of N(5)-hydroxyornithine for FC biosynthesis involves the constitutively expressed sidL. FC is hydroxylated to HFC by an as yet uncharacterized enzyme during conidiation. Assembly of fusarinine C (FsC) and FC is catalyzed by two different nonribosomal peptide synthetases (NRPS), sidD and sidC respectively. Subsequently, sidG catalyzes N2-acetylation of FsC for forming TAFC. Both extra- and intracellular siderophores are crucial for growth during iron limitation and virulence. The polypeptide is FsC-acetyl coenzyme A-N(2)-transacetylase (Aspergillus fumigatus (strain ATCC MYA-4609 / CBS 101355 / FGSC A1100 / Af293) (Neosartorya fumigata)).